Reading from the N-terminus, the 257-residue chain is 3-methyl-2-oxobutanoate hydroxymethyltransferase (257 aa).

Asp-42 and Asp-86 together coordinate Mg(2+). Residues 42-43 (DS), Asp-86, and Lys-116 each bind 3-methyl-2-oxobutanoate. Glu-118 lines the Mg(2+) pocket. Glu-185 (proton acceptor) is an active-site residue.

Belongs to the PanB family. In terms of assembly, homodecamer; pentamer of dimers. Requires Mg(2+) as cofactor.

Its subcellular location is the cytoplasm. The catalysed reaction is 3-methyl-2-oxobutanoate + (6R)-5,10-methylene-5,6,7,8-tetrahydrofolate + H2O = 2-dehydropantoate + (6S)-5,6,7,8-tetrahydrofolate. Its pathway is cofactor biosynthesis; (R)-pantothenate biosynthesis; (R)-pantoate from 3-methyl-2-oxobutanoate: step 1/2. In terms of biological role, catalyzes the reversible reaction in which hydroxymethyl group from 5,10-methylenetetrahydrofolate is transferred onto alpha-ketoisovalerate to form ketopantoate. The sequence is that of 3-methyl-2-oxobutanoate hydroxymethyltransferase from Prochlorococcus marinus (strain MIT 9301).